The chain runs to 120 residues: Glycine cleavage system H protein (120 aa).

Residues Val17–Lys99 enclose the Lipoyl-binding domain. Lys58 is subject to N6-lipoyllysine.

It belongs to the GcvH family. The glycine cleavage system is composed of four proteins: P, T, L and H. (R)-lipoate is required as a cofactor.

In terms of biological role, the glycine cleavage system catalyzes the degradation of glycine. The H protein shuttles the methylamine group of glycine from the P protein to the T protein. The protein is Glycine cleavage system H protein of Sinorhizobium medicae (strain WSM419) (Ensifer medicae).